We begin with the raw amino-acid sequence, 143 residues long: MSIKQHRPKVGEILECDYGQFSHTCHVDGHIPPEMVKKRLVVVLNAKLNGLILVAPISSKINLDGIKNGYHIEIDSELIKATGFYDKRTRWIKSELIQSVSRLRLYHIYDKGTKITQYLPRDVVTKVQRAIIKAINASSLLDK.

To E.coli YifN.

This is an uncharacterized protein from Haemophilus influenzae (strain ATCC 51907 / DSM 11121 / KW20 / Rd).